Consider the following 359-residue polypeptide: 5-amino-6-(D-ribitylamino)uracil--L-tyrosine 4-hydroxyphenyl transferase (359 aa).

Residues 45 to 282 (VTYVVNANIN…TYAISRIFFK (238 aa)) enclose the Radical SAM core domain. [4Fe-4S] cluster contacts are provided by C59, C63, and C66.

It belongs to the radical SAM superfamily. CofH family. As to quaternary structure, consists of two subunits, CofG and CofH. [4Fe-4S] cluster serves as cofactor.

The enzyme catalyses 5-amino-6-(D-ribitylamino)uracil + L-tyrosine + S-adenosyl-L-methionine = 5-amino-5-(4-hydroxybenzyl)-6-(D-ribitylimino)-5,6-dihydrouracil + 2-iminoacetate + 5'-deoxyadenosine + L-methionine + H(+). It participates in cofactor biosynthesis; coenzyme F0 biosynthesis. In terms of biological role, catalyzes the radical-mediated synthesis of 5-amino-5-(4-hydroxybenzyl)-6-(D-ribitylimino)-5,6-dihydrouracil from 5-amino-6-(D-ribitylamino)uracil and L-tyrosine. The sequence is that of 5-amino-6-(D-ribitylamino)uracil--L-tyrosine 4-hydroxyphenyl transferase from Methanococcus maripaludis (strain C5 / ATCC BAA-1333).